Consider the following 502-residue polypeptide: Putative diacyglycerol O-acyltransferase MT1809 (502 aa).

His-174 serves as the catalytic Proton acceptor.

This sequence belongs to the long-chain O-acyltransferase family.

It catalyses the reaction an acyl-CoA + a 1,2-diacyl-sn-glycerol = a triacyl-sn-glycerol + CoA. The protein operates within glycerolipid metabolism; triacylglycerol biosynthesis. The protein is Putative diacyglycerol O-acyltransferase MT1809 of Mycobacterium tuberculosis (strain CDC 1551 / Oshkosh).